A 342-amino-acid polypeptide reads, in one-letter code: ATPase asna-1 (342 aa).

26 to 33 (KGGVGKTT) is a binding site for ATP. Residue D55 is part of the active site. 2 residues coordinate ATP: E243 and N270. Zn(2+) is bound by residues C285 and C288.

Belongs to the arsA ATPase family. Homodimer.

It localises to the cytoplasm. It is found in the endoplasmic reticulum. Its function is as follows. ATPase required for the post-translational delivery of tail-anchored (TA) proteins to the endoplasmic reticulum. Recognizes and selectively binds the transmembrane domain of TA proteins in the cytosol. This complex then targets to the endoplasmic reticulum by membrane-bound receptors, where the tail-anchored protein is released for insertion. This process is regulated by ATP binding and hydrolysis. ATP binding drives the homodimer towards the closed dimer state, facilitating recognition of newly synthesized TA membrane proteins. ATP hydrolysis is required for insertion. Subsequently, the homodimer reverts towards the open dimer state, lowering its affinity for the membrane-bound receptor, and returning it to the cytosol to initiate a new round of targeting. May be involved in insulin signaling. In Caenorhabditis elegans, this protein is ATPase asna-1.